The primary structure comprises 468 residues: MKKTLYEKLFDAHVVHEAEGETPLIYINRHLVHEVTSPQAFDGLRAMGREVRQPTKTVATMDHNVPTDSRDLGGSGEMGRIQMVELAKNTEQFGVTLYDINHINQGIVHVMGPEQGLTLPGMTIVCGDSHTATHGAFGALAFGIGTSEVEHVLATQTVKQARAKKMKIEVRGKVREGITAKDIVLAIIGKTTMAGGTGHVVEFCGEAIRDLSMEGRMTVCNMAIELGAKSGLIAPDETTFAYLKDRPSAPKGKDWDDAVAYWKTLHTDEGAEFDTVVTLEASEIEPQVTWGTNPGHVIGINETIPNPADMADPIERQSAEKALAYMGLPHSIKLTDVAIDKVFIGSCTNSRIEDLRAAAAVAKGRKVADGVQALVVPGSGLVREQAEKEGLDKIFIEAGFEWRQPGCSMCLAMNNDRLEPGERCASTSNRNFEGRQGRGGRTHLVSPAMAAAAAVHGKFVDIRNVELH.

[4Fe-4S] cluster contacts are provided by cysteine 347, cysteine 407, and cysteine 410.

The protein belongs to the aconitase/IPM isomerase family. LeuC type 1 subfamily. As to quaternary structure, heterodimer of LeuC and LeuD. Requires [4Fe-4S] cluster as cofactor.

The catalysed reaction is (2R,3S)-3-isopropylmalate = (2S)-2-isopropylmalate. It participates in amino-acid biosynthesis; L-leucine biosynthesis; L-leucine from 3-methyl-2-oxobutanoate: step 2/4. Its function is as follows. Catalyzes the isomerization between 2-isopropylmalate and 3-isopropylmalate, via the formation of 2-isopropylmaleate. The polypeptide is 3-isopropylmalate dehydratase large subunit (Glaesserella parasuis serovar 5 (strain SH0165) (Haemophilus parasuis)).